The chain runs to 67 residues: Large ribosomal subunit protein uL29 (67 aa).

The protein belongs to the universal ribosomal protein uL29 family.

The polypeptide is Large ribosomal subunit protein uL29 (Methanosarcina mazei (strain ATCC BAA-159 / DSM 3647 / Goe1 / Go1 / JCM 11833 / OCM 88) (Methanosarcina frisia)).